Reading from the N-terminus, the 269-residue chain is Regulatory protein RecX (269 aa).

Belongs to the RecX family.

Its subcellular location is the cytoplasm. Functionally, modulates RecA activity. In Listeria monocytogenes serotype 4a (strain HCC23), this protein is Regulatory protein RecX.